The chain runs to 253 residues: Probable transcriptional regulatory protein Krad_3057 (253 aa).

The protein belongs to the TACO1 family.

It is found in the cytoplasm. In Kineococcus radiotolerans (strain ATCC BAA-149 / DSM 14245 / SRS30216), this protein is Probable transcriptional regulatory protein Krad_3057.